We begin with the raw amino-acid sequence, 453 residues long: Bifunctional protein GlmU (453 aa).

The segment at 1–227 is pyrophosphorylase; the sequence is MTQDIVILAA…EAEVAGVNDR (227 aa). UDP-N-acetyl-alpha-D-glucosamine is bound by residues 8 to 11, Lys22, Gln73, 78 to 79, 100 to 102, Gly137, Glu152, Asn167, and Asn225; these read LAAG, GT, and YGD. Asp102 serves as a coordination point for Mg(2+). Mg(2+) is bound at residue Asn225. Positions 228–248 are linker; the sequence is VQLAALERELQNQQAVSLMQN. Positions 249–453 are N-acetyltransferase; it reads GATLLDPSRI…KDNWPRPIKK (205 aa). UDP-N-acetyl-alpha-D-glucosamine is bound by residues Arg331 and Lys349. The active-site Proton acceptor is the His361. Residues Tyr364 and Asn375 each coordinate UDP-N-acetyl-alpha-D-glucosamine. Acetyl-CoA-binding positions include Ala378, 384-385, Ser403, Ala421, and Arg438; that span reads NY.

This sequence in the N-terminal section; belongs to the N-acetylglucosamine-1-phosphate uridyltransferase family. It in the C-terminal section; belongs to the transferase hexapeptide repeat family. Homotrimer. Mg(2+) is required as a cofactor.

It is found in the cytoplasm. It catalyses the reaction alpha-D-glucosamine 1-phosphate + acetyl-CoA = N-acetyl-alpha-D-glucosamine 1-phosphate + CoA + H(+). The enzyme catalyses N-acetyl-alpha-D-glucosamine 1-phosphate + UTP + H(+) = UDP-N-acetyl-alpha-D-glucosamine + diphosphate. Its pathway is nucleotide-sugar biosynthesis; UDP-N-acetyl-alpha-D-glucosamine biosynthesis; N-acetyl-alpha-D-glucosamine 1-phosphate from alpha-D-glucosamine 6-phosphate (route II): step 2/2. The protein operates within nucleotide-sugar biosynthesis; UDP-N-acetyl-alpha-D-glucosamine biosynthesis; UDP-N-acetyl-alpha-D-glucosamine from N-acetyl-alpha-D-glucosamine 1-phosphate: step 1/1. It participates in bacterial outer membrane biogenesis; LPS lipid A biosynthesis. Catalyzes the last two sequential reactions in the de novo biosynthetic pathway for UDP-N-acetylglucosamine (UDP-GlcNAc). The C-terminal domain catalyzes the transfer of acetyl group from acetyl coenzyme A to glucosamine-1-phosphate (GlcN-1-P) to produce N-acetylglucosamine-1-phosphate (GlcNAc-1-P), which is converted into UDP-GlcNAc by the transfer of uridine 5-monophosphate (from uridine 5-triphosphate), a reaction catalyzed by the N-terminal domain. This is Bifunctional protein GlmU from Marinomonas sp. (strain MWYL1).